Reading from the N-terminus, the 292-residue chain is Carbapenem-hydrolyzing beta-lactamase transcriptional activator (292 aa).

Residues 5-62 (IPLNALRAFEASARYLNFTKAGLELHVSQAAVSQHVRTLEAILGVNLFKRLPRGLQLT) enclose the HTH lysR-type domain. A DNA-binding region (H-T-H motif) is located at residues 22–41 (FTKAGLELHVSQAAVSQHVR).

This sequence belongs to the LysR transcriptional regulatory family.

Functionally, this protein is a positive regulator of gene expression of carbapenem-hydrolyzing beta-lactamase (smeA). Seems to also be a repressor of its own transcription. In Serratia marcescens, this protein is Carbapenem-hydrolyzing beta-lactamase transcriptional activator (smeR).